We begin with the raw amino-acid sequence, 943 residues long: Isoleucine--tRNA ligase (943 aa).

Positions 58 to 68 (PYANGTIHIGH) match the 'HIGH' region motif. E567 is an L-isoleucyl-5'-AMP binding site. The 'KMSKS' region motif lies at 608–612 (KMSKS). Residue K611 participates in ATP binding. C906, C909, C926, and C929 together coordinate Zn(2+).

The protein belongs to the class-I aminoacyl-tRNA synthetase family. IleS type 1 subfamily. As to quaternary structure, monomer. Zn(2+) serves as cofactor.

It localises to the cytoplasm. The enzyme catalyses tRNA(Ile) + L-isoleucine + ATP = L-isoleucyl-tRNA(Ile) + AMP + diphosphate. Catalyzes the attachment of isoleucine to tRNA(Ile). As IleRS can inadvertently accommodate and process structurally similar amino acids such as valine, to avoid such errors it has two additional distinct tRNA(Ile)-dependent editing activities. One activity is designated as 'pretransfer' editing and involves the hydrolysis of activated Val-AMP. The other activity is designated 'posttransfer' editing and involves deacylation of mischarged Val-tRNA(Ile). In Pseudomonas syringae pv. tomato (strain ATCC BAA-871 / DC3000), this protein is Isoleucine--tRNA ligase.